The following is a 254-amino-acid chain: Pectate lyase E (254 aa).

Residues 1–17 (MYQPLLLLPLLLTSAFA) form the signal peptide. Residues 227-254 (TNNNSKEPKKKSSGPSSYCKYSEPLSKC) are disordered. Asparagine 229 carries an N-linked (GlcNAc...) asparagine glycan. A compositionally biased stretch (low complexity) spans 239 to 254 (SGPSSYCKYSEPLSKC).

This sequence belongs to the polysaccharide lyase 3 family. Ca(2+) is required as a cofactor.

It is found in the secreted. The catalysed reaction is Eliminative cleavage of (1-&gt;4)-alpha-D-galacturonan to give oligosaccharides with 4-deoxy-alpha-D-galact-4-enuronosyl groups at their non-reducing ends.. Pectinolytic enzyme consist of four classes of enzymes: pectin lyase, polygalacturonase, pectin methylesterase and rhamnogalacturonase. Among pectinolytic enzymes, pectin lyase is the most important in depolymerization of pectin, since it cleaves internal glycosidic bonds of highly methylated pectins. Favors pectate, the anion, over pectin, the methyl ester. This chain is Pectate lyase E (plyE), found in Emericella nidulans (strain FGSC A4 / ATCC 38163 / CBS 112.46 / NRRL 194 / M139) (Aspergillus nidulans).